Consider the following 375-residue polypeptide: Queuine tRNA-ribosyltransferase (375 aa).

Asp-89 (proton acceptor) is an active-site residue. Residues 89–93 (DSGGF), Asp-143, Gln-187, and Gly-214 contribute to the substrate site. An RNA binding region spans residues 245 to 251 (GVGKPED). Asp-264 serves as the catalytic Nucleophile. Positions 269 to 273 (TRNAR) are RNA binding; important for wobble base 34 recognition. 4 residues coordinate Zn(2+): Cys-302, Cys-304, Cys-307, and His-333.

The protein belongs to the queuine tRNA-ribosyltransferase family. As to quaternary structure, homodimer. Within each dimer, one monomer is responsible for RNA recognition and catalysis, while the other monomer binds to the replacement base PreQ1. Zn(2+) serves as cofactor.

It carries out the reaction 7-aminomethyl-7-carbaguanine + guanosine(34) in tRNA = 7-aminomethyl-7-carbaguanosine(34) in tRNA + guanine. The protein operates within tRNA modification; tRNA-queuosine biosynthesis. Catalyzes the base-exchange of a guanine (G) residue with the queuine precursor 7-aminomethyl-7-deazaguanine (PreQ1) at position 34 (anticodon wobble position) in tRNAs with GU(N) anticodons (tRNA-Asp, -Asn, -His and -Tyr). Catalysis occurs through a double-displacement mechanism. The nucleophile active site attacks the C1' of nucleotide 34 to detach the guanine base from the RNA, forming a covalent enzyme-RNA intermediate. The proton acceptor active site deprotonates the incoming PreQ1, allowing a nucleophilic attack on the C1' of the ribose to form the product. After dissociation, two additional enzymatic reactions on the tRNA convert PreQ1 to queuine (Q), resulting in the hypermodified nucleoside queuosine (7-(((4,5-cis-dihydroxy-2-cyclopenten-1-yl)amino)methyl)-7-deazaguanosine). The sequence is that of Queuine tRNA-ribosyltransferase from Klebsiella pneumoniae subsp. pneumoniae (strain ATCC 700721 / MGH 78578).